The following is a 248-amino-acid chain: Flagellar L-ring protein (248 aa).

A signal peptide spans 1–23; the sequence is MRHAFRHSVRTLGLLGLLPVLSA. C24 is lipidated: N-palmitoyl cysteine. C24 is lipidated: S-diacylglycerol cysteine.

The protein belongs to the FlgH family. As to quaternary structure, the basal body constitutes a major portion of the flagellar organelle and consists of four rings (L,P,S, and M) mounted on a central rod.

It localises to the cell outer membrane. The protein resides in the bacterial flagellum basal body. Functionally, assembles around the rod to form the L-ring and probably protects the motor/basal body from shearing forces during rotation. The sequence is that of Flagellar L-ring protein from Gluconobacter oxydans (strain 621H) (Gluconobacter suboxydans).